Reading from the N-terminus, the 472-residue chain is MRPFIHDDFLLHTDAARDLYHSFAKAEPIFDYHCHLPQQQILENHQFADLAEIWLGGDHYKWRAMRANGVKERFCTGAATPREKFDAWVGAVPHTLRNPLYHWSHLELARYFGIFDLINQKSADKIWREANEKLATMRVHDILAANKVAVICTTDDPADSLEQHEKIKKLGIKTRVYPTFRPDKALNVGSPAAYNAWLEKLAGAAKTKIASFDDFLSALKKRHDDFHAIGGRLSDHGMENCYAEPCTATEAQAIFDAARAGRAASVADQAKFASFMMLEFGRWDAKKGWTKQLHLGALRNNNTRLLATLGPDTGFDSIGDFPQTRALSRYLDTLDSTDELPRTVLYNLNPADNYAFATMIGNFQDGSVPGKMQFGSGWWFLDQKEAMEWQMNALSNQGLLSRFVGMLTDSRSFLSYTRHEYFRRTLCNLIGAEMERGEIPNDRELVGPMVRRICFANAREYFRLELDPSFRG.

It belongs to the metallo-dependent hydrolases superfamily. Uronate isomerase family.

The enzyme catalyses D-glucuronate = D-fructuronate. It catalyses the reaction aldehydo-D-galacturonate = keto-D-tagaturonate. The protein operates within carbohydrate metabolism; pentose and glucuronate interconversion. This chain is Uronate isomerase, found in Opitutus terrae (strain DSM 11246 / JCM 15787 / PB90-1).